We begin with the raw amino-acid sequence, 488 residues long: UDP-N-acetylmuramate--L-alanine ligase (488 aa).

122 to 128 (GTHGKTT) lines the ATP pocket.

It belongs to the MurCDEF family.

The protein localises to the cytoplasm. The enzyme catalyses UDP-N-acetyl-alpha-D-muramate + L-alanine + ATP = UDP-N-acetyl-alpha-D-muramoyl-L-alanine + ADP + phosphate + H(+). The protein operates within cell wall biogenesis; peptidoglycan biosynthesis. In terms of biological role, cell wall formation. The chain is UDP-N-acetylmuramate--L-alanine ligase from Mycobacterium marinum (strain ATCC BAA-535 / M).